The primary structure comprises 249 residues: Metallo-beta-lactamase type 2 (249 aa).

The N-terminal stretch at 1-22 is a signal peptide; sequence MLKRLKGLLVLALGFTGLQVFG. His-98, His-100, Asp-102, His-161, and Cys-180 together coordinate Zn(2+). Position 183 (Lys-183) interacts with substrate. Residue His-222 coordinates Zn(2+).

Belongs to the metallo-beta-lactamase superfamily. Class-B beta-lactamase family. Monomer. Zn(2+) is required as a cofactor.

Its subcellular location is the periplasm. It catalyses the reaction a beta-lactam + H2O = a substituted beta-amino acid. Confers resistance to the different beta-lactams antibiotics (penicillin, cephalosporin and carbapenem) via the hydrolysis of the beta-lactam ring. The chain is Metallo-beta-lactamase type 2 (blaB5) from Elizabethkingia meningoseptica (Chryseobacterium meningosepticum).